A 215-amino-acid chain; its full sequence is dITP/XTP pyrophosphatase (215 aa).

Substrate is bound at residue 13–18 (THNIGK). Asp74 functions as the Proton acceptor in the catalytic mechanism. Asp74 contributes to the Mg(2+) binding site. Substrate contacts are provided by residues Ser75, 163–166 (FGFD), Lys186, and 199–200 (HR).

It belongs to the HAM1 NTPase family. As to quaternary structure, homodimer. Requires Mg(2+) as cofactor.

It carries out the reaction XTP + H2O = XMP + diphosphate + H(+). The enzyme catalyses dITP + H2O = dIMP + diphosphate + H(+). The catalysed reaction is ITP + H2O = IMP + diphosphate + H(+). In terms of biological role, pyrophosphatase that catalyzes the hydrolysis of nucleoside triphosphates to their monophosphate derivatives, with a high preference for the non-canonical purine nucleotides XTP (xanthosine triphosphate), dITP (deoxyinosine triphosphate) and ITP. Seems to function as a house-cleaning enzyme that removes non-canonical purine nucleotides from the nucleotide pool, thus preventing their incorporation into DNA/RNA and avoiding chromosomal lesions. This is dITP/XTP pyrophosphatase from Bartonella henselae (strain ATCC 49882 / DSM 28221 / CCUG 30454 / Houston 1) (Rochalimaea henselae).